A 427-amino-acid polypeptide reads, in one-letter code: Histidinol dehydrogenase (427 aa).

Substrate-binding residues include S232, Q254, and H257. Zn(2+) contacts are provided by Q254 and H257. Catalysis depends on proton acceptor residues E322 and H323. H323, D356, E410, and H415 together coordinate substrate. D356 lines the Zn(2+) pocket. H415 lines the Zn(2+) pocket.

It belongs to the histidinol dehydrogenase family. Zn(2+) serves as cofactor.

It carries out the reaction L-histidinol + 2 NAD(+) + H2O = L-histidine + 2 NADH + 3 H(+). It participates in amino-acid biosynthesis; L-histidine biosynthesis; L-histidine from 5-phospho-alpha-D-ribose 1-diphosphate: step 9/9. Catalyzes the sequential NAD-dependent oxidations of L-histidinol to L-histidinaldehyde and then to L-histidine. This chain is Histidinol dehydrogenase, found in Listeria innocua serovar 6a (strain ATCC BAA-680 / CLIP 11262).